A 337-amino-acid chain; its full sequence is Glyceraldehyde-3-phosphate dehydrogenase (337 aa).

Residues 12–13, Asp-34, and Lys-79 each bind NAD(+); that span reads RI. D-glyceraldehyde 3-phosphate is bound by residues 150–152, Thr-181, 210–211, and Arg-233; these read SCT and TG. The Nucleophile role is filled by Cys-151. Asn-315 serves as a coordination point for NAD(+).

It belongs to the glyceraldehyde-3-phosphate dehydrogenase family. As to quaternary structure, homotetramer.

Its subcellular location is the cytoplasm. The enzyme catalyses D-glyceraldehyde 3-phosphate + phosphate + NAD(+) = (2R)-3-phospho-glyceroyl phosphate + NADH + H(+). The protein operates within carbohydrate degradation; glycolysis; pyruvate from D-glyceraldehyde 3-phosphate: step 1/5. The chain is Glyceraldehyde-3-phosphate dehydrogenase (GPD) from Phanerodontia chrysosporium (White-rot fungus).